We begin with the raw amino-acid sequence, 355 residues long: Methyltransferase FUS9 (355 aa).

S-adenosyl-L-homocysteine is bound by residues Tyr18, Asn63, Asp86, Ser123, and Phe124. Position 231 (Phe231) interacts with Mg(2+).

It belongs to the methyltransferase superfamily. Type-7 methyltransferase family. The cofactor is Mg(2+).

The protein operates within mycotoxin biosynthesis. Functionally, methyltransferase; part of the gene cluster that mediates the biosynthesis of the mycotoxin fusarin C. Within the cluster, FUS1, FUS2, FUS8 and FUS9 are sufficient for fusarin production. The roles of the other FUS members are yet undetermined. The fusarin C synthetase FUS1 is responsible for the condensation of one acetyl-coenzyme A (CoA) unit with six malonyl-CoA units and the amide linkage of the arising heptaketide and homoserine, subsequently releasing the first intermediate, prefusarin, as an alcohol with an open ring structure. The cytochrome P450 monooxygenase FUS8 participates in multiple oxidation processes at carbon C-20 and is able to use the FUS1 product as substrate, resulting in formation of 20-hydroxy-prefusarin. This reaction seems to be essential before the 2-pyrrolidone ring closure can be catalyzed by FUS2, generating 20-hydroxy-fusarin. FUS8 is able to further oxidizes carbon C-20 after ring closure, resulting in the formation of carboxy-fusarin C. As the last step, FUS9 methylates the hydroxyl group at C-21 to generate fusarin C. Fusarin C can then rearrange to epi-fusarin C, the (z)-isomers, and fusarin A and fusarin D. The protein is Methyltransferase FUS9 of Gibberella moniliformis (strain M3125 / FGSC 7600) (Maize ear and stalk rot fungus).